Consider the following 1765-residue polypeptide: Sodium channel protein type 11 subunit alpha (1765 aa).

Residues 1–126 (MEERYYPVIF…PLRSLMIRIS (126 aa)) lie on the Cytoplasmic side of the membrane. The I repeat unit spans residues 115 to 403 (FNPLRSLMIR…VTMAYEEQNR (289 aa)). A helical transmembrane segment spans residues 127-148 (VHSVFSMFIICTVIINCMFMAN). The Extracellular segment spans residues 149-157 (SMERSFDND). A helical membrane pass occupies residues 158-177 (IPEYVFIGIYILEAVIKILA). Residues 178–189 (RGFIVDEFSFLR) lie on the Cytoplasmic side of the membrane. A helical membrane pass occupies residues 190–209 (DPWNWLDFIVIGTAIATCFP). At 210–216 (GSQVNLS) the chain is on the extracellular side. An N-linked (GlcNAc...) asparagine glycan is attached at N214. The helical; Voltage-sensor transmembrane segment at 217–236 (ALRTFRVFRALKAISVISGL) threads the bilayer. At 237 to 252 (KVIVGALLRSVKKLVD) the chain is on the cytoplasmic side. A helical membrane pass occupies residues 253–266 (VMVLTLFCLSIFAL). The Extracellular portion of the chain corresponds to 267–339 (VGQQLFMGIL…PDNNYTKFDN (73 aa)). C280 and C317 form a disulfide bridge. N-linked (GlcNAc...) asparagine glycans are attached at residues N319 and N333. The segment at residues 340-364 (FGWSFLAMFRVMTQDSWERLYRQIL) is an intramembrane region (pore-forming). The Extracellular segment spans residues 365-371 (RTSGIYF). Residues 372 to 397 (VFFFVVVIFLGSFYLLNLTLAVVTMA) traverse the membrane as a helical segment. Over 398–567 (YEEQNRNVAA…WLCIKKVLRT (170 aa)) the chain is Cytoplasmic. An II repeat occupies 554-820 (CSPQWLCIKK…EGETRKTKVQ (267 aa)). Residues 568–591 (IMTDPFTELAITICIIINTVFLAV) traverse the membrane as a helical segment. Topologically, residues 592–602 (EHHNMDDNLKT) are extracellular. The chain crosses the membrane as a helical span at residues 603 to 626 (ILKIGNWVFTGIFIAEMCLKIIAL). Topologically, residues 627–634 (DPYHYFRH) are cytoplasmic. Residues 635-656 (GWNVFDSIVALLSLADVLYNTL) traverse the membrane as a helical segment. Residues 657 to 662 (SDNNRS) are Extracellular-facing. N-linked (GlcNAc...) asparagine glycosylation is present at N660. The helical; Voltage-sensor transmembrane segment at 663–682 (FLASLRVLRVFKLAKSWPTL) threads the bilayer. Topologically, residues 683–697 (NTLIKIIGHSVGALG) are cytoplasmic. The chain crosses the membrane as a helical span at residues 698 to 720 (NLTVVLTIVVFIFSVVGMRLFGT). Residues 721 to 741 (KFNKTAYATQERPRRRWHMDN) are Extracellular-facing. N-linked (GlcNAc...) asparagine glycosylation is present at N723. An intramembrane region (pore-forming) is located at residues 742-762 (FYHSFLVVFRILCGEWIENMW). Over 763-772 (GCMQDMDGSP) the chain is Extracellular. A disulfide bridge links C764 with C774. Residues 773 to 798 (LCIIVFVLIMVIGKLVVLNLFIALLL) form a helical membrane-spanning segment. Residues 799-1029 (NSFSNEEKDG…WWNIRKTCYQ (231 aa)) lie on the Cytoplasmic side of the membrane. Residues 1022 to 1319 (NIRKTCYQIV…KKYYNAMKKL (298 aa)) form an III repeat. A helical transmembrane segment spans residues 1030–1052 (IVKHSWFESFIIFVILLSSGALI). Residues 1053–1066 (FEDVNLPSRPQVEK) lie on the Extracellular side of the membrane. Residues 1067–1092 (LLRCTDNIFTFIFLLEMILKWVAFGF) form a helical membrane-spanning segment. Residues 1093–1098 (RRYFTS) lie on the Cytoplasmic side of the membrane. A helical membrane pass occupies residues 1099-1116 (AWCWLDFLIVVVSVLSLM). N1117 is a topological domain (extracellular). The chain crosses the membrane as a helical; Voltage-sensor span at residues 1118-1139 (LPSLKSFRTLRALRPLRALSQF). Residues 1140–1158 (EGMKVVVYALISAIPAILN) lie on the Cytoplasmic side of the membrane. A helical transmembrane segment spans residues 1159 to 1180 (VLLVCLIFWLVFCILGVNLFSG). Residues 1181–1223 (KFGRCINGTDINMYLDFTEVPNRSQCNISNYSWKVPQVNFDNV) lie on the Extracellular side of the membrane. N1187, N1202, N1207, and N1210 each carry an N-linked (GlcNAc...) asparagine glycan. The segment at residues 1224-1245 (GNAYLALLQVATYKGWLEIMNA) is an intramembrane region (pore-forming). The Extracellular segment spans residues 1246–1261 (AVDSREKDEQPDFEAN). The chain crosses the membrane as a helical span at residues 1262 to 1288 (LYAYLYFVVFIIFGSFFTLNLFIGVII). The Cytoplasmic portion of the chain corresponds to 1289–1341 (DNFNQQQKKLGGQDIFMTEEQKKYYNAMKKLGTKKPQKPIPRPLNKCQAFVFD). Residues 1328–1619 (IPRPLNKCQA…WEKFDPEASQ (292 aa)) form an IV repeat. Residues 1342 to 1365 (LVTSQVFDVIILGLIVLNMIIMMA) traverse the membrane as a helical segment. Residues 1366–1376 (ESADQPKDVKK) lie on the Extracellular side of the membrane. A helical transmembrane segment spans residues 1377-1400 (TFDILNIAFVVIFTIECLIKVFAL). The Cytoplasmic portion of the chain corresponds to 1401 to 1406 (RQHYFT). A helical membrane pass occupies residues 1407-1430 (NGWNLFDCVVVVLSIISTLVSRLE). At 1431–1440 (DSDISFPPTL) the chain is on the extracellular side. The chain crosses the membrane as a helical; Voltage-sensor span at residues 1441–1463 (FRVVRLARIGRILRLVRAARGIR). The Cytoplasmic segment spans residues 1464 to 1478 (TLLFALMMSLPSLFN). A helical membrane pass occupies residues 1479–1501 (IGLLLFLVMFIYAIFGMSWFSKV). The Extracellular portion of the chain corresponds to 1502–1515 (KKGSGIDDIFNFET). Residues 1516 to 1538 (FTGSMLCLFQITTSAGWDTLLNP) constitute an intramembrane region (pore-forming). Residues 1539–1559 (MLEAKEHCNSSSQDSCQQPQI) lie on the Extracellular side of the membrane. Residue N1547 is glycosylated (N-linked (GlcNAc...) asparagine). The chain crosses the membrane as a helical span at residues 1560–1584 (AVVYFVSYIIISFLIVVNMYIAVIL). Residues 1585-1765 (ENFNTATEES…DVAKVKVHND (181 aa)) lie on the Cytoplasmic side of the membrane.

The protein belongs to the sodium channel (TC 1.A.1.10) family. Nav1.9/SCN11A subfamily. As to quaternary structure, the voltage-resistant sodium channel consists of an ion conducting pore forming alpha-subunit regulated by one or more auxiliary subunits SCN1B, SCN2B and SCN3B. As to expression, expressed (at protein level) in myenteric sensory neurons. Expressed in small sensory neurons of the dorsal root ganglia (C-fiber neurons) and trigeminal ganglia.

Its subcellular location is the cell membrane. It carries out the reaction Na(+)(in) = Na(+)(out). With respect to regulation, activity is not sensitive to inhibition by tetrodotoxin. Functionally, sodium channel mediating the voltage-dependent sodium ion permeability of excitable membranes. Assuming opened or closed conformations in response to the voltage difference across the membrane, the protein forms a sodium-selective channel through which sodium ions may pass in accordance with their electrochemical gradient. Involved in membrane depolarization during action potential in nociceptors which function as key relay stations for the electrical transmission of pain signals from the periphery to the central nervous system. Also involved in rapid BDNF-evoked neuronal depolarization. The sequence is that of Sodium channel protein type 11 subunit alpha from Rattus norvegicus (Rat).